The sequence spans 316 residues: Transaldolase (316 aa).

K127 serves as the catalytic Schiff-base intermediate with substrate.

It belongs to the transaldolase family. Type 2 subfamily.

Its subcellular location is the cytoplasm. It carries out the reaction D-sedoheptulose 7-phosphate + D-glyceraldehyde 3-phosphate = D-erythrose 4-phosphate + beta-D-fructose 6-phosphate. It functions in the pathway carbohydrate degradation; pentose phosphate pathway; D-glyceraldehyde 3-phosphate and beta-D-fructose 6-phosphate from D-ribose 5-phosphate and D-xylulose 5-phosphate (non-oxidative stage): step 2/3. Its function is as follows. Transaldolase is important for the balance of metabolites in the pentose-phosphate pathway. The protein is Transaldolase of Helicobacter pylori (strain Shi470).